A 182-amino-acid polypeptide reads, in one-letter code: Late embryogenesis abundant protein 3 (182 aa).

The disordered stretch occupies residues 1 to 51; it reads MAQHQHSPQRPRDQDNTRPHDQYGIVFSVSGDDVARKQGDSFSQPDPTVAT. A Nuclear localization signal (NLS) motif is present at residues 7–11; sequence SPQRP. The span at 10-21 shows a compositional bias: basic and acidic residues; the sequence is RPRDQDNTRPHD. 2 consecutive SMP domains span residues 58 to 115 and 123 to 181; these read VTIG…TNEQ and VNIA…LNQQ. Residues 145 to 182 are disordered; the sequence is EDAEAVVGAELRSSSEMKTTPGGVADSMSAGARLNQQL.

It belongs to the LEA type SMP family.

The protein resides in the cytoplasm. Its subcellular location is the nucleus. Functionally, LEA proteins are late embryonic proteins abundant in higher plant seed embryos. The function of those proteins is not known. This chain is Late embryogenesis abundant protein 3, found in Arabidopsis thaliana (Mouse-ear cress).